The primary structure comprises 945 residues: MSFRKYYSWKYPDVPEDVAPLLLELKNSLVVVGVVGRSKCSLANKMSVFGMQPEETHEPANGQIMCYYKPGTSTLLLHFESTHDEVVLGQKLLEQTSIDFDHFYGNMRSQFVRMMLLALHTCHIVVYVETGQTFDPALVTICQLLKYVREQHLLEFLPQLLRETSAGNLLGDRARLCTPRILFIFENYPADVEKTREFISTHEFQTEDKIYELFRQYNIVMQSASNSLLALPNNKQFVFYNANEILRPDRLLLAIDALNATMYKQDVKEEEEDLEIIALAPFEGFVKPFGDAYTVRKSDEQLYRESHTVWHFLQRHVQDALEGCFDEGSFKQLSQSPPFQLLNFKTWHMCMVSIHKLLVGNVEDVNYVSTNAHYQAYLRDFTESLNYEKRFWYHLSELGLKKGISAYKHSAAVTYGSAAHKQMLANATLVFEEEGRGPYAELALAKLNDVCLRYWHDGRQQCEFPSLRGNPCILPRDVSHDKHSSGVVHISSCNCGRTLGRREDPYTLRQANYDYYEHMAVMCNLCVKVKRFQFPVFTPSISDYRAAAFEAAFPLLLQAHKNRAEPQVEEDSDQEANAAEEPYSQPATEAEPEPEKEPQASANEWSQPMSATYGSDLNMSIAGFGVSLKEGGAEAEVEEAEVCDKGSQDNSTSSDTSTESEIELQPKERSAQKANQILISTTEYLPGLVHMCSGLELLPLFPSWSLACVGPSSIYSHNTGLQEHFQSGFLSGANYLLPWDVQVRLVQPHYKHQQQQLMGKKNQRYRKQGDRLALKIFIGFEYECSRGHRFMMRSPERVLRGGADIERDTSTKVINNNMPLYFPCPCRAQNTFLAQLMRIHVVTPKAPVNIILDPKVLVGKYTFTLGCSILPMLSQSAYWILRLPYVYQGDNEIIAPPEKIEPTNRLAGGCILAGLFGIAETESMELKEPRITSMTFTRLQSHAYK.

Disordered stretches follow at residues 563 to 604 (RAEP…SANE) and 633 to 671 (AEAE…ERSA).

The protein belongs to the SMG8 family.

Functionally, involved in nonsense-mediated decay (NMD) of mRNAs containing premature stop codons. Probable component of kinase complex containing nonC and recruited to stalled ribosomes. The sequence is that of Nonsense-mediated mRNA decay factor SMG8 from Drosophila grimshawi (Hawaiian fruit fly).